The primary structure comprises 642 residues: Epithelial sodium channel subunit alpha (642 aa).

Topologically, residues 1-81 (MHQVVTVKAE…VCSKRNKMKT (81 aa)) are cytoplasmic. The helical transmembrane segment at 82-102 (AFWSVLFFLTFGLMYWQFGIL) threads the bilayer. Topologically, residues 103–553 (YREYFSFPVN…NQWSLWFGSS (451 aa)) are extracellular. 10 disulfide bridges follow: C130–C297, C222–C229, C274–C281, C385–C470, C407–C447, C407–C466, C411–C462, C420–C447, C420–C470, and C422–C436. The interval 170–209 (GAAQSSQKRSQRSLSHHVQRHPLRRRKRNEPVSLKGNSPP) is disordered. A compositionally biased stretch (basic residues) spans 178-197 (RSQRSLSHHVQRHPLRRRKR). The chain crosses the membrane as a helical span at residues 554–574 (VLSVVELAELILDFIAITIIL). Residues 575 to 642 (SFKRFRSRQV…RDGEAVIGLE (68 aa)) lie on the Cytoplasmic side of the membrane. The segment at 587–608 (PSVPPPGAHDNTAFQSEPADPS) is disordered.

The protein belongs to the amiloride-sensitive sodium channel (TC 1.A.6) family. SCNN1A subfamily. Heterotrimer; disulfide-linked and containing an alpha/SCNN1A, a beta/SCNN1B and a gamma/SCNN1G subunit.

It localises to the apical cell membrane. The protein resides in the cell projection. Its subcellular location is the cilium. It is found in the cytoplasmic granule. The protein localises to the cytoplasm. It localises to the cytoplasmic vesicle. The protein resides in the secretory vesicle. Its subcellular location is the acrosome. It is found in the flagellum. The catalysed reaction is Na(+)(in) = Na(+)(out). Its activity is regulated as follows. Originally identified and characterized by its inhibition by the diuretic drug amiloride. Its function is as follows. This is one of the three pore-forming subunits of the heterotrimeric epithelial sodium channel (ENaC), a critical regulator of sodium balance and fluid homeostasis. ENaC operates in epithelial tissues, where it mediates the electrodiffusion of sodium ions from extracellular fluid through the apical membrane of cells, with water following osmotically. In Pelodiscus sinensis (Chinese softshell turtle), this protein is Epithelial sodium channel subunit alpha.